The following is a 467-amino-acid chain: UDP-N-acetylmuramoylalanine--D-glutamate ligase (467 aa).

ATP is bound at residue 118–124 (GTNGKTT).

The protein belongs to the MurCDEF family.

It localises to the cytoplasm. It carries out the reaction UDP-N-acetyl-alpha-D-muramoyl-L-alanine + D-glutamate + ATP = UDP-N-acetyl-alpha-D-muramoyl-L-alanyl-D-glutamate + ADP + phosphate + H(+). It participates in cell wall biogenesis; peptidoglycan biosynthesis. Cell wall formation. Catalyzes the addition of glutamate to the nucleotide precursor UDP-N-acetylmuramoyl-L-alanine (UMA). In Streptomyces avermitilis (strain ATCC 31267 / DSM 46492 / JCM 5070 / NBRC 14893 / NCIMB 12804 / NRRL 8165 / MA-4680), this protein is UDP-N-acetylmuramoylalanine--D-glutamate ligase.